Consider the following 287-residue polypeptide: HTH-type transcriptional regulator MurR (287 aa).

The region spanning 1-77 (MLYLAKMRNA…MALIEEHSVS (77 aa)) is the HTH rpiR-type domain. Residues 37–56 (SRNMAKQLEISQSSIVKFAQ) constitute a DNA-binding region (H-T-H motif). Positions 128–268 (VINLISKAPL…FVGMVQLNDV (141 aa)) constitute an SIS domain.

Homotetramer.

It functions in the pathway amino-sugar metabolism; N-acetylmuramate degradation [regulation]. Represses the expression of the murPQ operon involved in the uptake and degradation of N-acetylmuramic acid (MurNAc). Binds to two adjacent inverted repeats within the operator region. MurNAc 6-phosphate, the substrate of MurQ, is the specific inducer that weakens binding of MurR to the operator. This Salmonella arizonae (strain ATCC BAA-731 / CDC346-86 / RSK2980) protein is HTH-type transcriptional regulator MurR.